The primary structure comprises 652 residues: DNA ligase (652 aa).

NAD(+)-binding positions include 29-33 (DSDYD), 78-79 (SL), and E107. K109 acts as the N6-AMP-lysine intermediate in catalysis. NAD(+) contacts are provided by R130, E164, K278, and K302. Zn(2+) contacts are provided by C395, C398, C413, and C418. In terms of domain architecture, BRCT spans 577 to 652 (NSDAALFGLT…IEDEDWLRQL (76 aa)).

It belongs to the NAD-dependent DNA ligase family. LigA subfamily. It depends on Mg(2+) as a cofactor. Mn(2+) is required as a cofactor.

The enzyme catalyses NAD(+) + (deoxyribonucleotide)n-3'-hydroxyl + 5'-phospho-(deoxyribonucleotide)m = (deoxyribonucleotide)n+m + AMP + beta-nicotinamide D-nucleotide.. DNA ligase that catalyzes the formation of phosphodiester linkages between 5'-phosphoryl and 3'-hydroxyl groups in double-stranded DNA using NAD as a coenzyme and as the energy source for the reaction. It is essential for DNA replication and repair of damaged DNA. The chain is DNA ligase from Streptococcus pyogenes serotype M4 (strain MGAS10750).